The following is a 517-amino-acid chain: Benzoate 4-monooxygenase bphA (517 aa).

The chain crosses the membrane as a helical span at residues 4–24 (LLLSPYGAYLGLALLVLYYLL). Residues N282 and N325 are each glycosylated (N-linked (GlcNAc...) asparagine). C461 lines the heme pocket.

This sequence belongs to the cytochrome P450 family. Requires heme as cofactor.

It localises to the membrane. The enzyme catalyses benzoate + reduced [NADPH--hemoprotein reductase] + O2 = 4-hydroxybenzoate + oxidized [NADPH--hemoprotein reductase] + H2O + H(+). Cytochrome P450 monooxygenase; part of the benzoic acid degradation pathway also known as the protocatechuic acid pathway. Benzoic acid debradation begins with the conversion of benzoic acid into 4-hydroxybenzoic acid through hydroxylation by the benzoate-4-monooxygenase bphA, and its partner NADPH-cytochrome P450 reductase cprA which act as a mediator in electron donation from NADPH. 4-Hydroxybenzoic acid is then converted into 3,4-dihydroxybenzoic acid (also called protocatechuic acid) by the p-hydroxybenzoate-m-hydroxylase phhA. Protocatechuic acid is converted into 3-carboxy-cis,cis-muconic acid by the intradiol ring-cleavage dioxygenase prcA, which is further metabolized through the 3-oxoadipate pathway to finally enter the tricarboxylic acid cycle (TCA). The protein is Benzoate 4-monooxygenase bphA of Aspergillus niger (strain ATCC MYA-4892 / CBS 513.88 / FGSC A1513).